We begin with the raw amino-acid sequence, 118 residues long: Vesicle-associated membrane protein 1 (118 aa).

Residues 1–15 are compositionally biased toward low complexity; sequence MSAPAQPPTEGAEGA. A disordered region spans residues 1 to 36; that stretch reads MSAPAQPPTEGAEGAAPGGGPPGPPPNMTSNRRLQQ. The Cytoplasmic segment spans residues 1–96; sequence MSAPAQPPTE…KRKYWWKNCK (96 aa). Residues 33 to 93 form the v-SNARE coiled-coil homology domain; that stretch reads RLQQTQAQVE…AKLKRKYWWK (61 aa). Residue Ser-63 is modified to Phosphoserine. A helical; Anchor for type IV membrane protein membrane pass occupies residues 97-116; sequence MMIMLGAICAIIVVVIVIYF. The Vesicular segment spans residues 117–118; it reads FA.

This sequence belongs to the synaptobrevin family. Interacts with VAPA and VAPB.

Its subcellular location is the cytoplasmic vesicle. It localises to the secretory vesicle. The protein resides in the synaptic vesicle membrane. It is found in the synapse. The protein localises to the synaptosome. Its subcellular location is the cytoplasmic vesicle membrane. Involved in the targeting and/or fusion of transport vesicles to their target membrane. This chain is Vesicle-associated membrane protein 1 (VAMP1), found in Bos taurus (Bovine).